The sequence spans 305 residues: Homoserine O-acetyltransferase (305 aa).

Cysteine 142 functions as the Acyl-thioester intermediate in the catalytic mechanism. 2 residues coordinate substrate: lysine 163 and serine 192. Histidine 235 acts as the Proton acceptor in catalysis. Residue glutamate 237 is part of the active site. Arginine 249 contacts substrate.

The protein belongs to the MetA family.

The protein resides in the cytoplasm. It catalyses the reaction L-homoserine + acetyl-CoA = O-acetyl-L-homoserine + CoA. It participates in amino-acid biosynthesis; L-methionine biosynthesis via de novo pathway; O-acetyl-L-homoserine from L-homoserine: step 1/1. Functionally, transfers an acetyl group from acetyl-CoA to L-homoserine, forming acetyl-L-homoserine. The protein is Homoserine O-acetyltransferase of Bacteroides thetaiotaomicron (strain ATCC 29148 / DSM 2079 / JCM 5827 / CCUG 10774 / NCTC 10582 / VPI-5482 / E50).